The sequence spans 347 residues: NADH-ubiquinone oxidoreductase chain 2 (347 aa).

The next 10 membrane-spanning stretches (helical) occupy residues 13 to 33 (IVLG…WMGF), 59 to 79 (YFLT…INLV), 96 to 116 (IIMT…FWVP), 122 to 142 (ISLL…LSVL), 144 to 164 (VISP…SILI), 178 to 200 (ILAY…NPMM), 210 to 232 (LMTA…ALSH), 246 to 266 (IIML…KWMI), 276 to 296 (IILA…YMRL), and 326 to 346 (LPML…MILL).

This sequence belongs to the complex I subunit 2 family. As to quaternary structure, core subunit of respiratory chain NADH dehydrogenase (Complex I) which is composed of 45 different subunits. Interacts with TMEM242.

The protein resides in the mitochondrion inner membrane. The enzyme catalyses a ubiquinone + NADH + 5 H(+)(in) = a ubiquinol + NAD(+) + 4 H(+)(out). In terms of biological role, core subunit of the mitochondrial membrane respiratory chain NADH dehydrogenase (Complex I) which catalyzes electron transfer from NADH through the respiratory chain, using ubiquinone as an electron acceptor. Essential for the catalytic activity and assembly of complex I. This Rhynchonycteris naso (Brazilian long-nosed bat) protein is NADH-ubiquinone oxidoreductase chain 2.